Here is a 742-residue protein sequence, read N- to C-terminus: Ion-translocating oxidoreductase complex subunit C (742 aa).

4Fe-4S ferredoxin-type domains follow at residues glycine 369–tyrosine 397 and lysine 407–phenylalanine 436. 8 residues coordinate [4Fe-4S] cluster: cysteine 377, cysteine 380, cysteine 383, cysteine 387, cysteine 416, cysteine 419, cysteine 422, and cysteine 426. Residues lysine 602–alanine 719 are disordered.

This sequence belongs to the 4Fe4S bacterial-type ferredoxin family. RnfC subfamily. As to quaternary structure, the complex is composed of six subunits: RsxA, RsxB, RsxC, RsxD, RsxE and RsxG. [4Fe-4S] cluster serves as cofactor.

The protein resides in the cell inner membrane. Functionally, part of a membrane-bound complex that couples electron transfer with translocation of ions across the membrane. Required to maintain the reduced state of SoxR. In Escherichia coli O6:H1 (strain CFT073 / ATCC 700928 / UPEC), this protein is Ion-translocating oxidoreductase complex subunit C.